The chain runs to 416 residues: Doublesex- and mab-3-related transcription factor A2 (416 aa).

A DNA-binding region (DM) is located at residues 25 to 72; the sequence is CARCRNHGVVSALKGHKRYCRWKDCMCAKCTLIAERQRVMAAQVALRR. The span at 131–154 shows a compositional bias: polar residues; the sequence is FSKGQLSGPTTPQQAAGKSASAES. The disordered stretch occupies residues 131 to 226; it reads FSKGQLSGPT…PSPSSAASRH (96 aa). Residues 197–207 are compositionally biased toward low complexity; the sequence is GSVSSIGSDSG. Positions 227 to 262 constitute a DMA domain; it reads MNAIDILTRVFPSHKRSILELVLQGCGKDVVQAIEQ.

Belongs to the DMRT family.

It localises to the nucleus. May be involved in sexual development. This is Doublesex- and mab-3-related transcription factor A2 (dmrta2) from Takifugu rubripes (Japanese pufferfish).